Here is a 788-residue protein sequence, read N- to C-terminus: Endonuclease MutS2 (788 aa).

334–341 (GPNTGGKT) lines the ATP pocket. Positions 713-788 (LDLRGKRYEE…GNGATVVKFQ (76 aa)) constitute a Smr domain.

Belongs to the DNA mismatch repair MutS family. MutS2 subfamily. As to quaternary structure, homodimer. Binds to stalled ribosomes, contacting rRNA.

Endonuclease that is involved in the suppression of homologous recombination and thus may have a key role in the control of bacterial genetic diversity. Functionally, acts as a ribosome collision sensor, splitting the ribosome into its 2 subunits. Detects stalled/collided 70S ribosomes which it binds and splits by an ATP-hydrolysis driven conformational change. Acts upstream of the ribosome quality control system (RQC), a ribosome-associated complex that mediates the extraction of incompletely synthesized nascent chains from stalled ribosomes and their subsequent degradation. Probably generates substrates for RQC. In Enterococcus faecalis (strain ATCC 700802 / V583), this protein is Endonuclease MutS2.